The primary structure comprises 254 residues: E3 ubiquitin-protein ligase NEURL3 (254 aa).

One can recognise an NHR domain in the interval 17-174 (ALSFHGDATG…TTKAIELLDP (158 aa)). Residues 197–236 (CVICFHNTANTRLMPCGHSQFCGSCAWHIFKDTARCPMCR) form an RING-type zinc finger.

It localises to the cytoplasm. It catalyses the reaction S-ubiquitinyl-[E2 ubiquitin-conjugating enzyme]-L-cysteine + [acceptor protein]-L-lysine = [E2 ubiquitin-conjugating enzyme]-L-cysteine + N(6)-ubiquitinyl-[acceptor protein]-L-lysine.. It participates in protein modification; protein ubiquitination. E3 ubiquitin-protein ligase that plays a role in various biological processes such as lung development or innate immunity. Seems to utilize UBE2E1. Promotes innate antiviral response by catalyzing 'Lys-63'-linked ubiquitination of IRF7. Also inhibits hepatitis C virus assembly by directly binding to viral E1 envelope glycoprotein to disrupt its interaction with E2. Plays an essential role in TLR4-mediated activation of MAPK pathways by promoting 'Lys-48'-linked polyubiquitination of the phosphatase DUSP1/MKP1. In Rattus norvegicus (Rat), this protein is E3 ubiquitin-protein ligase NEURL3 (Neurl3).